Consider the following 237-residue polypeptide: Large ribosomal subunit protein uL1 (237 aa).

Belongs to the universal ribosomal protein uL1 family. Part of the 50S ribosomal subunit.

Functionally, binds directly to 23S rRNA. The L1 stalk is quite mobile in the ribosome, and is involved in E site tRNA release. Protein L1 is also a translational repressor protein, it controls the translation of the L11 operon by binding to its mRNA. This is Large ribosomal subunit protein uL1 from Dehalococcoides mccartyi (strain ATCC BAA-2100 / JCM 16839 / KCTC 5957 / BAV1).